The following is a 161-amino-acid chain: Allophycocyanin beta chain (161 aa).

Asn71 is modified (N4-methylasparagine). Cys81 contacts (2R,3E)-phycocyanobilin.

Belongs to the phycobiliprotein family. In terms of assembly, heterodimer of an alpha and a beta chain. Contains one covalently linked phycocyanobilin chromophore.

The protein localises to the cellular thylakoid membrane. Functionally, light-harvesting photosynthetic bile pigment-protein from the phycobiliprotein complex. Allophycocyanin has a maximum absorption at approximately 650 nanometers. The polypeptide is Allophycocyanin beta chain (apcB) (Anabaena variabilis).